The chain runs to 478 residues: Glycogen synthase (478 aa).

Lys-20 serves as a coordination point for ADP-alpha-D-glucose.

Belongs to the glycosyltransferase 1 family. Bacterial/plant glycogen synthase subfamily.

The catalysed reaction is [(1-&gt;4)-alpha-D-glucosyl](n) + ADP-alpha-D-glucose = [(1-&gt;4)-alpha-D-glucosyl](n+1) + ADP + H(+). Its pathway is glycan biosynthesis; glycogen biosynthesis. In terms of biological role, synthesizes alpha-1,4-glucan chains using ADP-glucose. The chain is Glycogen synthase from Cereibacter sphaeroides (strain ATCC 17025 / ATH 2.4.3) (Rhodobacter sphaeroides).